A 300-amino-acid chain; its full sequence is ATP-dependent (S)-NAD(P)H-hydrate dehydratase (300 aa).

A YjeF C-terminal domain is found at 14 to 293; the sequence is LLALFKTVVP…NQIPSVFQTE (280 aa). (6S)-NADPHX contacts are provided by residues Gly-114 and 167–173; that span reads NVMEFQR. Residues 198-202 and 219-228 contribute to the ATP site; these read KGAND and GSGRRCGGQG. Asp-229 contributes to the (6S)-NADPHX binding site.

It belongs to the NnrD/CARKD family. Requires Mg(2+) as cofactor.

The enzyme catalyses (6S)-NADHX + ATP = ADP + phosphate + NADH + H(+). The catalysed reaction is (6S)-NADPHX + ATP = ADP + phosphate + NADPH + H(+). Functionally, catalyzes the dehydration of the S-form of NAD(P)HX at the expense of ATP, which is converted to ADP. Together with NAD(P)HX epimerase, which catalyzes the epimerization of the S- and R-forms, the enzyme allows the repair of both epimers of NAD(P)HX, a damaged form of NAD(P)H that is a result of enzymatic or heat-dependent hydration. The sequence is that of ATP-dependent (S)-NAD(P)H-hydrate dehydratase from Drosophila melanogaster (Fruit fly).